Consider the following 260-residue polypeptide: UPF0246 protein Tola_0968 (260 aa).

This sequence belongs to the UPF0246 family.

In Tolumonas auensis (strain DSM 9187 / NBRC 110442 / TA 4), this protein is UPF0246 protein Tola_0968.